The chain runs to 118 residues: Probable non-functional immunoglobulin lambda variable 2-33 (118 aa).

The signal sequence occupies residues 1–19; the sequence is MAWALLLLTLLTQGTGSWA. The framework-1 stretch occupies residues 20–44; that stretch reads QSALTQPPFVSGAPGQSVTISCTGT. In terms of domain architecture, Ig-like spans 34–118; it reads GQSVTISCTG…CSLYSSSYTF (85 aa). The cysteines at positions 41 and 109 are disulfide-linked. A complementarity-determining-1 region spans residues 45–53; that stretch reads SSDVGDYDH. A framework-2 region spans residues 54 to 70; sequence VFWYQKRLSTTSRLLIY. The complementarity-determining-2 stretch occupies residues 71–73; the sequence is NVN. The framework-3 stretch occupies residues 74-109; that stretch reads TRPSGISDLFSGSKSGNMASLTISGLKSEVEANYHC. The segment at 110–118 is complementarity-determining-3; sequence SLYSSSYTF.

As to quaternary structure, immunoglobulins are composed of two identical heavy chains and two identical light chains; disulfide-linked.

It localises to the secreted. It is found in the cell membrane. Probable non-functional open reading frame (ORF) of V region of the variable domain of immunoglobulin light chains. Non-functional ORF generally cannot participate in the synthesis of a productive immunoglobulin chain due to altered V-(D)-J or switch recombination and/or splicing site (at mRNA level) and/or conserved amino acid change (protein level). Immunoglobulins, also known as antibodies, are membrane-bound or secreted glycoproteins produced by B lymphocytes. In the recognition phase of humoral immunity, the membrane-bound immunoglobulins serve as receptors which, upon binding of a specific antigen, trigger the clonal expansion and differentiation of B lymphocytes into immunoglobulins-secreting plasma cells. Secreted immunoglobulins mediate the effector phase of humoral immunity, which results in the elimination of bound antigens. The antigen binding site is formed by the variable domain of one heavy chain, together with that of its associated light chain. Thus, each immunoglobulin has two antigen binding sites with remarkable affinity for a particular antigen. The variable domains are assembled by a process called V-(D)-J rearrangement and can then be subjected to somatic hypermutations which, after exposure to antigen and selection, allow affinity maturation for a particular antigen. This is Probable non-functional immunoglobulin lambda variable 2-33 from Homo sapiens (Human).